A 248-amino-acid chain; its full sequence is Ras-like protein family member 11B (248 aa).

The small GTPase-like stretch occupies residues 30–248; sequence ASSRVIKIAV…SSKVRTATSV (219 aa). Residues 41–48, 88–99, and 153–156 contribute to the GTP site; these read GGSGVGKT, DTPGVQINEQNL, and NKAD. The segment at 206–228 is disordered; that stretch reads QNTGTSERRKNSIIPRPKSPNMQ.

It belongs to the small GTPase superfamily. Ras family.

It carries out the reaction GTP + H2O = GDP + phosphate + H(+). The sequence is that of Ras-like protein family member 11B from Xenopus laevis (African clawed frog).